The primary structure comprises 252 residues: Biosynthetic peptidoglycan transglycosylase (252 aa).

The chain crosses the membrane as a helical span at residues 23–43; the sequence is IGFLLGCIVAGVVAMQVYFFL.

This sequence belongs to the glycosyltransferase 51 family.

It localises to the cell inner membrane. It catalyses the reaction [GlcNAc-(1-&gt;4)-Mur2Ac(oyl-L-Ala-gamma-D-Glu-L-Lys-D-Ala-D-Ala)](n)-di-trans,octa-cis-undecaprenyl diphosphate + beta-D-GlcNAc-(1-&gt;4)-Mur2Ac(oyl-L-Ala-gamma-D-Glu-L-Lys-D-Ala-D-Ala)-di-trans,octa-cis-undecaprenyl diphosphate = [GlcNAc-(1-&gt;4)-Mur2Ac(oyl-L-Ala-gamma-D-Glu-L-Lys-D-Ala-D-Ala)](n+1)-di-trans,octa-cis-undecaprenyl diphosphate + di-trans,octa-cis-undecaprenyl diphosphate + H(+). The protein operates within cell wall biogenesis; peptidoglycan biosynthesis. Functionally, peptidoglycan polymerase that catalyzes glycan chain elongation from lipid-linked precursors. The sequence is that of Biosynthetic peptidoglycan transglycosylase from Cupriavidus pinatubonensis (strain JMP 134 / LMG 1197) (Cupriavidus necator (strain JMP 134)).